We begin with the raw amino-acid sequence, 95 residues long: Protein TusB (95 aa).

It belongs to the DsrH/TusB family. In terms of assembly, heterohexamer, formed by a dimer of trimers. The hexameric TusBCD complex contains 2 copies each of TusB, TusC and TusD. The TusBCD complex interacts with TusE.

It localises to the cytoplasm. Its function is as follows. Part of a sulfur-relay system required for 2-thiolation of 5-methylaminomethyl-2-thiouridine (mnm(5)s(2)U) at tRNA wobble positions. This is Protein TusB from Salmonella agona (strain SL483).